Reading from the N-terminus, the 23-residue chain is Basic phospholipase A2 CB1 (23 aa).

Heterodimer of an acidic subunit and a basic chain. The acidic subunit is non-toxic, without enzymatic activity and comprises 3 peptides that are cross-linked by 7 disulfide bridges. The basic subunit is toxic, has phospholipase A2 activity and is composed of a single chain. Ca(2+) is required as a cofactor. Post-translationally, contains 7 disulfide bonds. Expressed by the venom gland.

Its subcellular location is the secreted. The catalysed reaction is a 1,2-diacyl-sn-glycero-3-phosphocholine + H2O = a 1-acyl-sn-glycero-3-phosphocholine + a fatty acid + H(+). Functionally, snake venom phospholipase A2 (PLA2) that shows presynaptic neurotoxicity. PLA2 catalyzes the calcium-dependent hydrolysis of the 2-acyl groups in 3-sn-phosphoglycerides. In Crotalus basiliscus (Mexican west-coast rattlesnake), this protein is Basic phospholipase A2 CB1.